A 95-amino-acid polypeptide reads, in one-letter code: Aspartyl/glutamyl-tRNA(Asn/Gln) amidotransferase subunit C (95 aa).

Belongs to the GatC family. In terms of assembly, heterotrimer of A, B and C subunits.

The enzyme catalyses L-glutamyl-tRNA(Gln) + L-glutamine + ATP + H2O = L-glutaminyl-tRNA(Gln) + L-glutamate + ADP + phosphate + H(+). It carries out the reaction L-aspartyl-tRNA(Asn) + L-glutamine + ATP + H2O = L-asparaginyl-tRNA(Asn) + L-glutamate + ADP + phosphate + 2 H(+). Allows the formation of correctly charged Asn-tRNA(Asn) or Gln-tRNA(Gln) through the transamidation of misacylated Asp-tRNA(Asn) or Glu-tRNA(Gln) in organisms which lack either or both of asparaginyl-tRNA or glutaminyl-tRNA synthetases. The reaction takes place in the presence of glutamine and ATP through an activated phospho-Asp-tRNA(Asn) or phospho-Glu-tRNA(Gln). This is Aspartyl/glutamyl-tRNA(Asn/Gln) amidotransferase subunit C from Nitrosospira multiformis (strain ATCC 25196 / NCIMB 11849 / C 71).